We begin with the raw amino-acid sequence, 379 residues long: Queuine tRNA-ribosyltransferase (379 aa).

Asp-93 serves as the catalytic Proton acceptor. Residues 93–97, Asp-147, Gln-191, and Gly-218 contribute to the substrate site; that span reads DSGGF. Positions 249-255 are RNA binding; the sequence is GVGKPED. Asp-268 serves as the catalytic Nucleophile. The interval 273–277 is RNA binding; important for wobble base 34 recognition; sequence TRNAR. The Zn(2+) site is built by Cys-306, Cys-308, Cys-311, and His-337.

It belongs to the queuine tRNA-ribosyltransferase family. Homodimer. Within each dimer, one monomer is responsible for RNA recognition and catalysis, while the other monomer binds to the replacement base PreQ1. The cofactor is Zn(2+).

The enzyme catalyses 7-aminomethyl-7-carbaguanine + guanosine(34) in tRNA = 7-aminomethyl-7-carbaguanosine(34) in tRNA + guanine. It participates in tRNA modification; tRNA-queuosine biosynthesis. Functionally, catalyzes the base-exchange of a guanine (G) residue with the queuine precursor 7-aminomethyl-7-deazaguanine (PreQ1) at position 34 (anticodon wobble position) in tRNAs with GU(N) anticodons (tRNA-Asp, -Asn, -His and -Tyr). Catalysis occurs through a double-displacement mechanism. The nucleophile active site attacks the C1' of nucleotide 34 to detach the guanine base from the RNA, forming a covalent enzyme-RNA intermediate. The proton acceptor active site deprotonates the incoming PreQ1, allowing a nucleophilic attack on the C1' of the ribose to form the product. After dissociation, two additional enzymatic reactions on the tRNA convert PreQ1 to queuine (Q), resulting in the hypermodified nucleoside queuosine (7-(((4,5-cis-dihydroxy-2-cyclopenten-1-yl)amino)methyl)-7-deazaguanosine). The chain is Queuine tRNA-ribosyltransferase from Actinobacillus succinogenes (strain ATCC 55618 / DSM 22257 / CCUG 43843 / 130Z).